A 114-amino-acid polypeptide reads, in one-letter code: uncharacterized protein (114 aa).

The next 3 membrane-spanning stretches (helical) occupy residues 21 to 41 (LASS…VCLF), 65 to 85 (GCFS…SALI), and 93 to 113 (LSVF…ILTD).

Its subcellular location is the membrane. This is an uncharacterized protein from Saccharomyces cerevisiae (strain ATCC 204508 / S288c) (Baker's yeast).